The chain runs to 78 residues: Large ribosomal subunit protein bL28 (78 aa).

The disordered stretch occupies residues methionine 1–threonine 25.

The protein belongs to the bacterial ribosomal protein bL28 family.

The chain is Large ribosomal subunit protein bL28 from Vibrio vulnificus (strain CMCP6).